We begin with the raw amino-acid sequence, 367 residues long: C-glycoside deglycosidase alpha subunit (367 aa).

Residue E146 participates in Mg(2+) binding. H148 acts as the Proton acceptor in catalysis. Mg(2+) contacts are provided by D178, H276, and E312.

It belongs to the C-glycoside deglycosidase alpha subunit family. Heterodimer composed of an alpha subunit (CarB1) and a beta subunit (CarC1). Mg(2+) serves as cofactor.

It carries out the reaction 3''-dehydroisovitexin = 1,5-anhydro-D-erythro-hex-1-en-3-ulose + apigenin. With respect to regulation, activity is strongly reduced in the presence of chelating agents. Carbon-carbon bond-cleaving enzyme which participates in the metabolism of C-glycosides. Acts on the C6-glycosylated compound 3''-dehydroisovitexin (3''-oxo-isovitexin). Shows weak activity with 3''-dehydroisoorientin (3''-oxo-homoorientin) and 3'-dehydromangiferin (3'-oxo-mangiferin). The chain is C-glycoside deglycosidase alpha subunit from Arthrobacter globiformis (strain ATCC 8010 / DSM 20124 / JCM 1332 / NBRC 12137 / NCIMB 8907 / NRRL B-2979 / 168).